The following is a 302-amino-acid chain: Sulfate adenylyltransferase subunit 2 (302 aa).

The protein belongs to the PAPS reductase family. CysD subfamily. As to quaternary structure, heterodimer composed of CysD, the smaller subunit, and CysN.

The enzyme catalyses sulfate + ATP + H(+) = adenosine 5'-phosphosulfate + diphosphate. It functions in the pathway sulfur metabolism; hydrogen sulfide biosynthesis; sulfite from sulfate: step 1/3. With CysN forms the ATP sulfurylase (ATPS) that catalyzes the adenylation of sulfate producing adenosine 5'-phosphosulfate (APS) and diphosphate, the first enzymatic step in sulfur assimilation pathway. APS synthesis involves the formation of a high-energy phosphoric-sulfuric acid anhydride bond driven by GTP hydrolysis by CysN coupled to ATP hydrolysis by CysD. The sequence is that of Sulfate adenylyltransferase subunit 2 from Escherichia coli O9:H4 (strain HS).